A 298-amino-acid chain; its full sequence is Glyoxalase domain-containing protein 4 (298 aa).

The VOC 1 domain occupies 5–130 (RALHFVFKVG…GGYKFYLQDR (126 aa)). K109 carries the N6-succinyllysine modification. S131 is subject to Phosphoserine. One can recognise a VOC 2 domain in the interval 137–258 (PVLKVTLAVS…DGHEICFVGD (122 aa)). K273 carries the post-translational modification N6-succinyllysine.

This sequence belongs to the glyoxalase I family. As to quaternary structure, interacts with NUDT9.

The protein resides in the mitochondrion. This is Glyoxalase domain-containing protein 4 (Glod4) from Rattus norvegicus (Rat).